Here is a 695-residue protein sequence, read N- to C-terminus: ATP-dependent permease MDL1, mitochondrial (695 aa).

The transit peptide at 1 to 100 (MIVRMIRLCK…RLFVLSKPES (100 aa)) directs the protein to the mitochondrion. 5 helical membrane-spanning segments follow: residues 103 to 123 (IGLA…VPSV), 156 to 176 (FTAL…RIII), 242 to 262 (FVGF…MMIL), 337 to 357 (GLFF…LLLV), and 372 to 392 (LSSF…LSSF). Residues 103 to 398 (IGLALLLILI…LSSFYSELMK (296 aa)) enclose the ABC transmembrane type-1 domain. The ABC transporter domain maps to 432 to 673 (IVFKNVSFTY…PNSELNALLA (242 aa)). 467–474 (GPSGSGKS) contributes to the ATP binding site.

This sequence belongs to the ABC transporter superfamily. ABCB family. Mitochondrial peptide exporter (TC 3.A.1.212) subfamily.

Its subcellular location is the mitochondrion inner membrane. Mediates export of peptides with molecular masses of 2100 to 600 daltons generated upon proteolysis of mitochondrial inner membrane proteins. In Saccharomyces cerevisiae (strain ATCC 204508 / S288c) (Baker's yeast), this protein is ATP-dependent permease MDL1, mitochondrial (MDL1).